Reading from the N-terminus, the 885-residue chain is Exosome complex component 10 (885 aa).

A Glycyl lysine isopeptide (Lys-Gly) (interchain with G-Cter in SUMO2) cross-link involves residue K19. In terms of domain architecture, 3'-5' exonuclease spans H289–M455. Mg(2+) contacts are provided by D313, E315, D371, and D440. Positions N503–K583 constitute an HRDC domain. K583 participates in a covalent cross-link: Glycyl lysine isopeptide (Lys-Gly) (interchain with G-Cter in SUMO1); alternate. Residue K583 forms a Glycyl lysine isopeptide (Lys-Gly) (interchain with G-Cter in SUMO2); alternate linkage. A Glycyl lysine isopeptide (Lys-Gly) (interchain with G-Cter in SUMO2) cross-link involves residue K710. Composition is skewed to basic and acidic residues over residues A776–Q794 and K804–T816. Residues A776–R885 form a disordered region. Residue S821 is modified to Phosphoserine. Residues K826, K833, and K859 each participate in a glycyl lysine isopeptide (Lys-Gly) (interchain with G-Cter in SUMO2) cross-link. Polar residues predominate over residues N831–S848. The segment covering S861–T871 has biased composition (polar residues). Residue K873 forms a Glycyl lysine isopeptide (Lys-Gly) (interchain with G-Cter in SUMO2) linkage.

The protein belongs to the exosome component 10/RRP6 family. In terms of assembly, component of the RNA exosome complex. The catalytically inactive RNA exosome core complex (Exo-9) associates with the catalytic subunit EXOSC10/RRP6 (via its N-terminus). Exo-9 may associate with DIS3 to form the nucleolar exosome complex, or DIS3L to form the cytoplasmic exosome complex. The RNA exosome complex interacts with cofactors C1D/RRP47, MPHOSPH6/MPP6 and MTREX/MTR4. Interacts with MTREX; the interaction with MTREX mediates the association of MTREX with nuclear RNA exosomes. Part of the small subunit (SSU) processome, composed of more than 70 proteins and the RNA chaperone small nucleolar RNA (snoRNA) U3. Interacts with ALYREF/THOC4. Interacts with DHX36; this interaction occurs in a RNase-insensitive manner. Interacts with NRDE2. Interacts (via C-terminus) with USP36 (via C-terminus); the interaction is facilitated by the association with RNA and promotes sumoylation of EXOSC10. Mg(2+) is required as a cofactor. In terms of processing, sumoylated by USP36; sumoylation does not significantly affect EXOSC10 nucleolar localization and association with core exosome and USP36, but regulates the nucleolar RNA exosome activity in rRNA processing by promoting binding of EXOSC10 to pre-rRNAs. Effects of sumoylation on EXOSC10 levels vary between different studies. Sumoylation of EXOSC10 is required for the modulation of EXOSC10 effects on cellular protein translation and cell proliferation. Sumoylation is promoted by mild hypothermia.

The protein localises to the cytoplasm. The protein resides in the nucleus. It is found in the nucleolus. Its subcellular location is the nucleoplasm. Its activity is regulated as follows. Arginine-rich dipeptide repeat proteins expressed from C9orf72-derived repeat RNA interact with EXOSC10 and inhibit its ability to promote degradation of this RNA. In terms of biological role, catalytic component of the RNA exosome complex which has 3'-&gt;5' exoribonuclease activity and participates in a multitude of cellular RNA processing and degradation events. In the nucleus, the RNA exosome complex is involved in proper maturation of stable RNA species such as rRNA, snRNA and snoRNA, in the elimination of RNA processing by-products and non-coding 'pervasive' transcripts, such as antisense RNA species and promoter-upstream transcripts (PROMPTs), and of mRNAs with processing defects, thereby limiting or excluding their export to the cytoplasm. Part of the small subunit (SSU) processome, first precursor of the small eukaryotic ribosomal subunit. During the assembly of the SSU processome in the nucleolus, many ribosome biogenesis factors, an RNA chaperone and ribosomal proteins associate with the nascent pre-rRNA and work in concert to generate RNA folding, modifications, rearrangements and cleavage as well as targeted degradation of pre-ribosomal RNA by the RNA exosome. The RNA exosome may be involved in Ig class switch recombination (CSR) and/or Ig variable region somatic hypermutation (SHM) by targeting AICDA deamination activity to transcribed dsDNA substrates. In the cytoplasm, the RNA exosome complex is involved in general mRNA turnover and specifically degrades inherently unstable mRNAs containing AU-rich elements (AREs) within their 3' untranslated regions, and in RNA surveillance pathways, preventing translation of aberrant mRNAs. It seems to be involved in degradation of histone mRNA. EXOSC10 is required for nucleolar localization of C1D and probably mediates the association of MTREX, C1D and MPHOSPH6 with the RNA exosome involved in the maturation of 5.8S rRNA. Plays a role in the recruitment of replication protein A complex (RPA) and RAD51 to DNA double-strand breaks caused by irradiation, contributing to DNA repair by homologous recombination. Regulates levels of damage-induced RNAs in order to prevent DNA-RNA hybrid formation at DNA double-strand breaks and limit DNA end resection after damage. Plays a role in oocyte development, maturation and survival. Required for normal testis development and mitotic division of spermatogonia. Plays a role in proper embryo development. Required for global protein translation. Required for cell proliferation. Regulates metabolism of C9orf72-derived repeat RNA that can be translated into toxic dipeptide repeat proteins. The sequence is that of Exosome complex component 10 from Homo sapiens (Human).